A 447-amino-acid polypeptide reads, in one-letter code: Phospholipase A(1) LCAT3 (447 aa).

Catalysis depends on S177, which acts as the Acyl-ester intermediate. Residues D384 and H409 each act as charge relay system in the active site.

It belongs to the AB hydrolase superfamily. Lipase family.

Its subcellular location is the microsome membrane. It catalyses the reaction a 1,2-diacyl-sn-glycero-3-phosphocholine + H2O = a 2-acyl-sn-glycero-3-phosphocholine + a fatty acid + H(+). Functionally, hydrolyzes the sn-1 acylester bond of phospholipids. Phosphatidylcholine, phosphatidylethanolamine and phosphatidic acid can be used as substrates. Weak activity with lysophosphatidylcholine and no activity with tripalmitoylglycerol and cholesteryl oleate. Seems to have a preference for unsaturated fatty acids at the sn-1 position. This is Phospholipase A(1) LCAT3 (LCAT3) from Arabidopsis thaliana (Mouse-ear cress).